The following is a 141-amino-acid chain: Nucleoside diphosphate kinase (141 aa).

The ATP site is built by Lys-11, Phe-59, Arg-87, Thr-93, Arg-104, and Asn-114. Catalysis depends on His-117, which acts as the Pros-phosphohistidine intermediate.

It belongs to the NDK family. Homotetramer. Mg(2+) serves as cofactor.

It is found in the cytoplasm. The catalysed reaction is a 2'-deoxyribonucleoside 5'-diphosphate + ATP = a 2'-deoxyribonucleoside 5'-triphosphate + ADP. It carries out the reaction a ribonucleoside 5'-diphosphate + ATP = a ribonucleoside 5'-triphosphate + ADP. Its function is as follows. Major role in the synthesis of nucleoside triphosphates other than ATP. The ATP gamma phosphate is transferred to the NDP beta phosphate via a ping-pong mechanism, using a phosphorylated active-site intermediate. The protein is Nucleoside diphosphate kinase of Xylella fastidiosa (strain M23).